Here is a 235-residue protein sequence, read N- to C-terminus: UPF0702 transmembrane protein YdfS (235 aa).

The next 2 membrane-spanning stretches (helical) occupy residues 32-52 (MTIFDFIAAITLGAIAAGLAY) and 60-80 (NMAISFSIFVLTIFLISFLSI).

Belongs to the UPF0702 family.

It localises to the cell membrane. The chain is UPF0702 transmembrane protein YdfS (ydfS) from Bacillus subtilis (strain 168).